A 60-amino-acid chain; its full sequence is Potassium channel toxin alpha-KTx 29.3 (60 aa).

An N-terminal signal peptide occupies residues 1-28; it reads MKSVCGVLIILVVLTTMLSISTFSTVGA. Intrachain disulfides connect Cys32–Cys51, Cys40–Cys56, and Cys44–Cys58.

This sequence belongs to the short scorpion toxin superfamily. Potassium channel inhibitor family. Alpha-KTx 29 subfamily. Expressed by the venom gland.

The protein resides in the secreted. Functionally, weakly inhibits the Kv1.3/KCNA3 channel (1 uM of thetoxin inhibits currents by 13.2%) and Kv7.1/KCNQ1 channel (10 uM of the toxin inhibits currents by 27.7%). The chain is Potassium channel toxin alpha-KTx 29.3 from Lychas mucronatus (Chinese swimming scorpion).